The following is a 100-amino-acid chain: MVKRTHGYRYKTRKLLRKKPREKGLSGLSRLLYEYKVGDKVIIDIDSTFISTAPHRRYQGKVGTVVGIRGRAYVIETFLGDKKKIIITTPEHLKPYQGGS.

This sequence belongs to the eukaryotic ribosomal protein eL21 family.

This is Large ribosomal subunit protein eL21 from Pyrobaculum aerophilum (strain ATCC 51768 / DSM 7523 / JCM 9630 / CIP 104966 / NBRC 100827 / IM2).